Here is a 215-residue protein sequence, read N- to C-terminus: Large ribosomal subunit protein bL25 (215 aa).

Residues 170 to 215 (DPDTSVASVTPPTTEEDLDTDDVDENAEPELVGAENDSADEESENK) form a disordered region. Acidic residues-rich tracts occupy residues 183–197 (TEED…ENAE) and 206–215 (DSADEESENK).

The protein belongs to the bacterial ribosomal protein bL25 family. CTC subfamily. Part of the 50S ribosomal subunit; part of the 5S rRNA/L5/L18/L25 subcomplex. Contacts the 5S rRNA. Binds to the 5S rRNA independently of L5 and L18.

This is one of the proteins that binds to the 5S RNA in the ribosome where it forms part of the central protuberance. The protein is Large ribosomal subunit protein bL25 of Oceanobacillus iheyensis (strain DSM 14371 / CIP 107618 / JCM 11309 / KCTC 3954 / HTE831).